Reading from the N-terminus, the 489-residue chain is MTAELLVNVTPSETRVAYIDGGILQEIHIEREARRGIVGNIYKGRVSRVLPGMQAAFVDIGLDKAAFLHASDIMPHTECVAGEEQKQFTVRDISELVRQGQDLMVQVVKDPLGTKGARLTTDITLPSRYLVFMPGASHVGVSQRIESESERERLKKVVAEYCDEQGGFIIRTAAEGVGEAELASDAAYLKRVWTKVMERKKRPQTRYQLYGELALAQRVLRDFADAELDRIRVDSRLTYEALLEFTSEYIPEMTSKLEHYTGRQPIFDLFDVENEIQRALERKVELKSGGYLIIDQTEAMTTVDINTGAFVGHRNLDDTIFNTNIEATQAIARQLRLRNLGGIIIIDFIDMNNEDHRRRVLHSLEQALSKDRVKTSVNGFSALGLVEMTRKRTRESIEHVLCNECPTCHGRGTVKTVETVCYEIMREIVRVHHAYDSDRFLVYASPAVAEALKGEESHSLAEVEIFVGKQVKVQIEPLYNQEQFDVVMM.

The region spanning 39 to 128 is the S1 motif domain; that stretch reads GNIYKGRVSR…LTTDITLPSR (90 aa). The Mg(2+) site is built by Asp304 and Asp347.

This sequence belongs to the RNase E/G family. RNase G subfamily. As to quaternary structure, homodimer, in equilibrium with possible higher multimers. Mg(2+) is required as a cofactor.

It is found in the cytoplasm. Its function is as follows. An endonuclease that acts in the processing of the 5'-end of 16S rRNA and 23S rRNA. It prefers 5'-monophosphorylated substrates and cleaves single-stranded sites rich in A and U residues; contributes to tRNA processing and mRNA turnover. The chain is Ribonuclease G (rng) from Escherichia coli O157:H7.